The chain runs to 149 residues: Stathmin (149 aa).

Residue A2 is modified to N-acetylalanine. Position 4 is a phosphoserine (S4). Positions 4 to 145 constitute an SLD domain; the sequence is SDIQVKELEK…NKESKDPADE (142 aa). K9 carries the post-translational modification N6-acetyllysine. Position 16 is a phosphoserine; by PKA (S16). Phosphoserine; by CDK1, MAPK1 and MAPK3 is present on S25. The segment at 27–46 is disordered; that stretch reads RSKESVPDFPLSPPKKKDLS. K29 is subject to N6-methyllysine. The residue at position 31 (S31) is a Phosphoserine. At S38 the chain carries Phosphoserine; by CDK1, MAPK1 and MAPK3. The stretch at 41–140 forms a coiled coil; it reads KKKDLSLEEI…EEVRKNKESK (100 aa). S63 is subject to Phosphoserine; by PKA. N6-acetyllysine occurs at positions 100 and 119. Basic and acidic residues predominate over residues 104-143; sequence KMEANKENREAQMAAKLERLREKDKHVEEVRKNKESKDPA. The interval 104-149 is disordered; that stretch reads KMEANKENREAQMAAKLERLREKDKHVEEVRKNKESKDPADETEAD.

It belongs to the stathmin family. In terms of assembly, binds to two alpha/beta-tubulin heterodimers. Interacts with KIST. In terms of processing, many different phosphorylated forms are observed depending on specific combinations among the sites which can be phosphorylated. MAPK is responsible for the phosphorylation of stathmin in response to NGF. Phosphorylation at Ser-16 seems to be required for neuron polarization. Highly expressed in the lateral nucleus of the amygdala.

It localises to the cytoplasm. Its subcellular location is the cytoskeleton. Involved in the regulation of the microtubule (MT) filament system by destabilizing microtubules. Prevents assembly and promotes disassembly of microtubules. Phosphorylation at Ser-16 may be required for axon formation during neurogenesis. Involved in the control of the learned and innate fear. This is Stathmin (Stmn1) from Mus musculus (Mouse).